A 435-amino-acid polypeptide reads, in one-letter code: Legumain (435 aa).

Residues 1–17 (MTWRVAVLLSLVLGAGA) form the signal peptide. The N-linked (GlcNAc...) asparagine glycan is linked to asparagine 93. Residue histidine 150 is part of the active site. The N-linked (GlcNAc...) asparagine glycan is linked to asparagine 169. Catalysis depends on cysteine 191, which acts as the Nucleophile. N-linked (GlcNAc...) asparagine glycans are attached at residues asparagine 215, asparagine 265, and asparagine 274. The propeptide occupies 326-435 (NMKESQVLVG…AMDKVCLSHY (110 aa)). Intrachain disulfides connect cysteine 380/cysteine 414 and cysteine 392/cysteine 431.

It belongs to the peptidase C13 family. As to quaternary structure, homodimer before autocatalytic removal of the propeptide. Monomer after autocatalytic processing. May interact with integrins. In terms of processing, activated by autocatalytic processing at pH 4. As to expression, detected in kidney cortex (at protein level).

Its subcellular location is the lysosome. It catalyses the reaction Hydrolysis of proteins and small molecule substrates at -Asn-|-Xaa- bonds.. In terms of biological role, has a strict specificity for hydrolysis of asparaginyl bonds. Can also cleave aspartyl bonds slowly, especially under acidic conditions. Involved in the processing of proteins for MHC class II antigen presentation in the lysosomal/endosomal system. Also involved in MHC class I antigen presentation in cross-presenting dendritic cells by mediating cleavage and maturation of Perforin-2 (MPEG1), thereby promoting antigen translocation in the cytosol. Required for normal lysosomal protein degradation in renal proximal tubules. Required for normal degradation of internalized EGFR. Plays a role in the regulation of cell proliferation via its role in EGFR degradation. This is Legumain (Lgmn) from Rattus norvegicus (Rat).